Reading from the N-terminus, the 642-residue chain is Extracellular metalloproteinase 5 (642 aa).

An N-terminal signal peptide occupies residues 1–19 (MHGLLLAAGLLSLPLHVLA). The propeptide occupies 20-246 (HPQPSTTTSL…VHNVVDYVAH (227 aa)). Asn287 carries an N-linked (GlcNAc...) asparagine glycan. His430 serves as a coordination point for Zn(2+). The active site involves Glu431. Zn(2+) is bound at residue His434. 2 N-linked (GlcNAc...) asparagine glycosylation sites follow: Asn595 and Asn624.

It belongs to the peptidase M36 family. Requires Zn(2+) as cofactor.

It is found in the secreted. Secreted metalloproteinase that allows assimilation of proteinaceous substrates and probably acts as a virulence factor. This Arthroderma gypseum (strain ATCC MYA-4604 / CBS 118893) (Microsporum gypseum) protein is Extracellular metalloproteinase 5 (MEP5).